A 175-amino-acid polypeptide reads, in one-letter code: Crossover junction endodeoxyribonuclease RuvC (175 aa).

Catalysis depends on residues aspartate 12, glutamate 72, and aspartate 144. Residues aspartate 12, glutamate 72, and aspartate 144 each contribute to the Mg(2+) site.

Belongs to the RuvC family. As to quaternary structure, homodimer which binds Holliday junction (HJ) DNA. The HJ becomes 2-fold symmetrical on binding to RuvC with unstacked arms; it has a different conformation from HJ DNA in complex with RuvA. In the full resolvosome a probable DNA-RuvA(4)-RuvB(12)-RuvC(2) complex forms which resolves the HJ. Mg(2+) serves as cofactor.

Its subcellular location is the cytoplasm. The catalysed reaction is Endonucleolytic cleavage at a junction such as a reciprocal single-stranded crossover between two homologous DNA duplexes (Holliday junction).. Its function is as follows. The RuvA-RuvB-RuvC complex processes Holliday junction (HJ) DNA during genetic recombination and DNA repair. Endonuclease that resolves HJ intermediates. Cleaves cruciform DNA by making single-stranded nicks across the HJ at symmetrical positions within the homologous arms, yielding a 5'-phosphate and a 3'-hydroxyl group; requires a central core of homology in the junction. The consensus cleavage sequence is 5'-(A/T)TT(C/G)-3'. Cleavage occurs on the 3'-side of the TT dinucleotide at the point of strand exchange. HJ branch migration catalyzed by RuvA-RuvB allows RuvC to scan DNA until it finds its consensus sequence, where it cleaves and resolves the cruciform DNA. The sequence is that of Crossover junction endodeoxyribonuclease RuvC from Beijerinckia indica subsp. indica (strain ATCC 9039 / DSM 1715 / NCIMB 8712).